Here is a 205-residue protein sequence, read N- to C-terminus: Probable thymidylate kinase (205 aa).

10–17 (GIDGSGKT) provides a ligand contact to ATP.

The protein belongs to the thymidylate kinase family.

It catalyses the reaction dTMP + ATP = dTDP + ADP. The protein is Probable thymidylate kinase (tmk) of Pyrococcus abyssi (strain GE5 / Orsay).